We begin with the raw amino-acid sequence, 319 residues long: NADH-ubiquinone oxidoreductase chain 1 (319 aa).

The next 8 helical transmembrane spans lie at 3–23 (LITL…AMAF), 74–94 (LFLL…IPLP), 106–126 (ILFI…SGWA), 149–169 (TLGL…LTTF), 175–195 (AVWL…STLA), 226–246 (LFFL…TILF), 254–274 (LTIN…FLWV), and 294–314 (FLPL…SMAG).

It belongs to the complex I subunit 1 family.

Its subcellular location is the mitochondrion inner membrane. The enzyme catalyses a ubiquinone + NADH + 5 H(+)(in) = a ubiquinol + NAD(+) + 4 H(+)(out). Core subunit of the mitochondrial membrane respiratory chain NADH dehydrogenase (Complex I) that is believed to belong to the minimal assembly required for catalysis. Complex I functions in the transfer of electrons from NADH to the respiratory chain. The immediate electron acceptor for the enzyme is believed to be ubiquinone. This Polypterus ornatipinnis (Ornate bichir) protein is NADH-ubiquinone oxidoreductase chain 1 (MT-ND1).